Here is a 123-residue protein sequence, read N- to C-terminus: Ribonuclease P protein component (123 aa).

Belongs to the RnpA family. In terms of assembly, consists of a catalytic RNA component (M1 or rnpB) and a protein subunit.

It carries out the reaction Endonucleolytic cleavage of RNA, removing 5'-extranucleotides from tRNA precursor.. Its function is as follows. RNaseP catalyzes the removal of the 5'-leader sequence from pre-tRNA to produce the mature 5'-terminus. It can also cleave other RNA substrates such as 4.5S RNA. The protein component plays an auxiliary but essential role in vivo by binding to the 5'-leader sequence and broadening the substrate specificity of the ribozyme. This Herpetosiphon aurantiacus (strain ATCC 23779 / DSM 785 / 114-95) protein is Ribonuclease P protein component.